Reading from the N-terminus, the 286-residue chain is Neuferricin homolog (286 aa).

Residues 1 to 23 form the signal peptide; sequence MFGFVKYLFKLQFLFILAAVLAG. The Cytochrome b5 heme-binding domain maps to 61–145; sequence ATVLTSAELS…KPNDLLGLAN (85 aa). A coiled-coil region spans residues 176–200; sequence HKYLALLEQAQIAKAEVDELRSKYP.

It belongs to the cytochrome b5 family. MAPR subfamily.

It localises to the secreted. In terms of biological role, heme-binding protein. The chain is Neuferricin homolog from Drosophila pseudoobscura pseudoobscura (Fruit fly).